A 1525-amino-acid polypeptide reads, in one-letter code: Multidrug resistance-associated protein 1 (1525 aa).

The Extracellular segment spans residues 1–33; that stretch reads MGIESLCSADASEPFWDWNLTWHTENPDFTQCF. The helical transmembrane segment at 34 to 54 threads the bilayer; that stretch reads QNTVLVWVPCIYLWVCFPAYF. At 55–74 the chain is on the cytoplasmic side; the sequence is LYLRSHDRGYIQMSILNKAK. Residues 75-95 traverse the membrane as a helical segment; sequence TALGLILWIVCWADLFYSFWE. Residues 96–100 are Extracellular-facing; that stretch reads RSQNI. A helical membrane pass occupies residues 101–121; that stretch reads FRAPFFLISPTVLGITMLLAT. The Cytoplasmic portion of the chain corresponds to 122 to 133; that stretch reads FLIQHERLKGVQ. Residues 134-154 form a helical membrane-spanning segment; sequence SSGVMMIFWLISLLCATVIFR. The Extracellular segment spans residues 155-172; sequence SKIMLALNTDTEVDAFRY. A helical transmembrane segment spans residues 173 to 193; it reads VTFCTYFILLLVQLILSCFPE. The Cytoplasmic segment spans residues 194–315; that stretch reads KPPLFSEAVN…RSSEASLSKV (122 aa). The helical transmembrane segment at 316-336 threads the bilayer; it reads LYKTFGPYFLMSFLFKAAHDL. The ABC transmembrane type-1 1 domain occupies 324 to 607; it reads FLMSFLFKAA…LPMVISSIVE (284 aa). Residues 337-362 lie on the Extracellular side of the membrane; the sequence is LMFTGPEILKLLINFVNNKSAPNWQG. The chain crosses the membrane as a helical span at residues 363 to 383; the sequence is YFYTGLLFVCACLQTLILHQY. Residues 384 to 439 are Cytoplasmic-facing; it reads FHICFVTGMRLKTAIVGVIYRKALVITNSARKTSTVGEIVNLMSVDAQRFMDLATY. A helical membrane pass occupies residues 440-460; it reads INMIWSAPLQVILALYLLWRN. Over 461 to 463 the chain is Extracellular; it reads LGP. The helical transmembrane segment at 464 to 484 threads the bilayer; that stretch reads SVLAGVAVMILLVPINAVMAM. Residues 485–546 are Cytoplasmic-facing; sequence KTKTYQVAQM…VLKKSAYLAA (62 aa). A helical transmembrane segment spans residues 547–567; the sequence is MGTFTWVCAPFLVALSTFAVY. At 568-589 the chain is on the extracellular side; sequence VKVNKNNILDAQKAFVSLALFN. The chain crosses the membrane as a helical span at residues 590-610; that stretch reads ILRFPLNILPMVISSIVEASV. The Cytoplasmic segment spans residues 611–961; it reads SLKRLRVFLS…VKATVYWEYM (351 aa). An ABC transporter 1 domain is found at 641 to 865; it reads IVVKNATFSW…DGAFAEFLRT (225 aa). An ATP-binding site is contributed by 675 to 682; the sequence is GQVGCGKS. Polar residues-rich tracts occupy residues 871-882 and 908-928; these read QSMESSDASSPS and SNSS…STAE. Disordered regions lie at residues 871–891 and 908–930; these read QSME…PVEN and SNSS…AELQ. Residues 962–982 form a helical membrane-spanning segment; that stretch reads KAIGLYISFLSVFLFMCNHIA. An ABC transmembrane type-1 2 domain is found at 969-1250; sequence SFLSVFLFMC…LVRMTSDLET (282 aa). Residues 983 to 1019 lie on the Extracellular side of the membrane; that stretch reads SLASNYWLSLWTDDPVVNGTQQYTNVRLGVYGALGIS. Residues 1020–1040 traverse the membrane as a helical segment; sequence QGIAVFGYSMAVSIGGIFASR. The Cytoplasmic portion of the chain corresponds to 1041–1083; sequence HLHLDLLHNVLRSPMSFFERTPSGNLVSRFSKEIDTIDSTIPP. A helical transmembrane segment spans residues 1084 to 1104; the sequence is IIKMFMGSTFNVIGACIIILL. Alanine 1105 is a topological domain (extracellular). The helical transmembrane segment at 1106–1126 threads the bilayer; that stretch reads TPIAAVVIPPLGLVYLLVQRF. Residues 1127 to 1197 lie on the Cytoplasmic side of the membrane; sequence YVATSRQLKR…VANRWLAVRL (71 aa). Residues 1198 to 1218 form a helical membrane-spanning segment; that stretch reads EFVGNCIVLFAALFAVIARNK. The Extracellular segment spans residues 1219–1220; that stretch reads LS. Residues 1221–1241 form a helical membrane-spanning segment; sequence PGLIGLSVSYSLQITAYLNWL. Topologically, residues 1242-1525 are cytoplasmic; that stretch reads VRMTSDLETN…YSMAKDSGLA (284 aa). Residues 1289-1521 enclose the ABC transporter 2 domain; sequence FRGFGLRYRE…KGLFYSMAKD (233 aa). 1321–1328 lines the ATP pocket; sequence GRTGAGKS.

The protein belongs to the ABC transporter superfamily. ABCC family. Conjugate transporter (TC 3.A.1.208) subfamily.

Its subcellular location is the cell membrane. The enzyme catalyses ATP + H2O + xenobioticSide 1 = ADP + phosphate + xenobioticSide 2.. It catalyses the reaction an S-substituted glutathione(in) + ATP + H2O = an S-substituted glutathione(out) + ADP + phosphate + H(+). The catalysed reaction is sphing-4-enine 1-phosphate(in) + ATP + H2O = sphing-4-enine 1-phosphate(out) + ADP + phosphate + H(+). It carries out the reaction leukotriene C4(in) + ATP + H2O = leukotriene C4(out) + ADP + phosphate + H(+). The enzyme catalyses 17beta-estradiol 17-O-(beta-D-glucuronate)(in) + ATP + H2O = 17beta-estradiol 17-O-(beta-D-glucuronate)(out) + ADP + phosphate + H(+). It catalyses the reaction 2',3'-cGAMP(in) + ATP + H2O = 2',3'-cGAMP(out) + ADP + phosphate + H(+). In terms of biological role, mediates export of organic anions and drugs from the cytoplasm. Mediates ATP-dependent transport of glutathione and glutathione conjugates, leukotriene C4, estradiol-17-beta-o-glucuronide and other xenobiotics. Hydrolyzes ATP with low efficiency. Mediates ATP-dependent, GSH-independent cyclic GMP-AMP (cGAMP) export. Thus, by limiting intracellular cGAMP concentrations negatively regulates the cGAS-STING pathway. This Gallus gallus (Chicken) protein is Multidrug resistance-associated protein 1.